Reading from the N-terminus, the 351-residue chain is MNPPKSAPDAQGLSYRDAGVDIDAGDALIDKIKPFAKKTLRDGVLGGIGGFGALFEVPKKYKEPVLVSGTDGVGTKLKLAFHLNKHDTVGQDLVAMSVNDILVQGAEPLFFLDYFACGKLDVDTAATVVKGIAHGCELSGCALIGGETAEMPGMYPDGEYDLAGFAVGAVEKSKIIDGSTIAEGDVVLGLASSGIHSNGFSLVRKIIERANPDLSADFHGRSLADTLMAPTRIYVKPLLALMQKLPVKGMAHITGGGLVENIPRVLREGLTAELDQNAWPLPPLFKWLQEHGGVADAEMHRVFNCGIGMAVIVSAADADAAIADLTAAGEQVWKIGTVRASREGEAQTVVV.

It belongs to the AIR synthase family.

Its subcellular location is the cytoplasm. The catalysed reaction is 2-formamido-N(1)-(5-O-phospho-beta-D-ribosyl)acetamidine + ATP = 5-amino-1-(5-phospho-beta-D-ribosyl)imidazole + ADP + phosphate + H(+). Its pathway is purine metabolism; IMP biosynthesis via de novo pathway; 5-amino-1-(5-phospho-D-ribosyl)imidazole from N(2)-formyl-N(1)-(5-phospho-D-ribosyl)glycinamide: step 2/2. The chain is Phosphoribosylformylglycinamidine cyclo-ligase from Burkholderia ambifaria (strain ATCC BAA-244 / DSM 16087 / CCUG 44356 / LMG 19182 / AMMD) (Burkholderia cepacia (strain AMMD)).